A 619-amino-acid chain; its full sequence is MEAEETMECLQEFPEHHKMILDRLNEQREQDRFTDITLIVDGHHFKAHKAVLAACSKFFYKFFQEFTQEPLVEIEGVSKMAFRHLIEFTYTAKLMIQGEEEANDVWKAAEFLQMLEAIKALEVRNKENSAPLEENTTGKNEAKKRKIAETSNVITESLPSAESEPVEIEVEIAEGTIEVEDEGIEALEEMASAKQSIKYIQSTGSSDDSALALLADITSKYRQGESKGQISEDDCASDPISKQVEGIEIVELQLSHVKDLFHCEKCNRSFKLFYHFKEHMKSHSTESFKCEICNKRYLRESAWKQHLNCYHLEEGGVSKKQRTGKKIHICQYCDKQFDHFGHFKEHLRKHTGEKPFECSNCHERFARNSTLKCHLTACQTGVGAKKGRKKLYECQVCNSVFNSWDQFKDHLVIHTGDKPNHCTLCDLWFMQGNELRRHLSDAHNISERIVTEEVLSVETHLQTEPVTSMTIIEQVGKVHVLPLLQVQVDSAQVTVEQVHPDLLQDSQVHDSQMTGLPEQVQVSYLEVGRIQTEEGTEVHVEELHVERVNQMPVEVQTELLEADLDHMTPEIMSQEEREPNHADAAMEEHEDAEGLETKPSEYSQARKTENDRTSLPVLE.

The BTB domain maps to 34 to 98 (TDITLIVDGH…TYTAKLMIQG (65 aa)). A Nuclear localization signal 1 motif is present at residues 137–148 (TGKNEAKKRKIA). Position 231 is a phosphoserine (serine 231). 3 consecutive C2H2-type zinc fingers follow at residues 261 to 283 (FHCEKCNRSFKLFYHFKEHMKSH), 288 to 311 (FKCEICNKRYLRESAWKQHLNCYH), and 328 to 350 (HICQYCDKQFDHFGHFKEHLRKH). Glycyl lysine isopeptide (Lys-Gly) (interchain with G-Cter in SUMO2) cross-links involve residues lysine 289 and lysine 295. The Nuclear localization signal 2 signature appears at 317–328 (VSKKQRTGKKIH). A C2H2-type 4; degenerate zinc finger spans residues 356–381 (FECSNCHERFARNSTLKCHLTACQTG). 2 C2H2-type zinc fingers span residues 392–414 (YECQVCNSVFNSWDQFKDHLVIH) and 420–443 (NHCTLCDLWFMQGNELRRHLSDAH). Basic and acidic residues-rich tracts occupy residues 574 to 587 (QEEREPNHADAAME) and 595 to 612 (LETKPSEYSQARKTENDR). The disordered stretch occupies residues 574-619 (QEEREPNHADAAMEEHEDAEGLETKPSEYSQARKTENDRTSLPVLE). A Glycyl lysine isopeptide (Lys-Gly) (interchain with G-Cter in SUMO) cross-link involves residue lysine 598.

The protein belongs to the krueppel C2H2-type zinc-finger protein family. Monosumoylated at Lys-598 by CBX4 and UHRF2. Sumoylation may potentiate ZNF131 inhibition of estrogen signaling. Sumoylation does not interfere with ubiquitination. In terms of processing, ubiquitinated. Ubiquitously expressed. Predominant expression is found in the developing central nervous system with strongest signals in the forebrain, midbrain, and hindbrain areas and in the neural tube.

The protein resides in the nucleus. In terms of biological role, may be involved in transcriptional regulation as a repressor of ESR1/ER-alpha signaling. Plays a role during development and organogenesis as well as in the function of the adult central nervous system. The polypeptide is Zinc finger protein 131 (Znf131) (Mus musculus (Mouse)).